Reading from the N-terminus, the 285-residue chain is Protease HtpX homolog (285 aa).

2 helical membrane passes run Thr-7–Gly-27 and Gly-30–Asp-50. Residue His-131 coordinates Zn(2+). Glu-132 is a catalytic residue. A Zn(2+)-binding site is contributed by His-135. The next 2 membrane-spanning stretches (helical) occupy residues Ile-146–Gly-166 and Ile-177–Ile-197. Residue Glu-202 coordinates Zn(2+).

Belongs to the peptidase M48B family. The cofactor is Zn(2+).

Its subcellular location is the cell inner membrane. The chain is Protease HtpX homolog from Burkholderia cenocepacia (strain ATCC BAA-245 / DSM 16553 / LMG 16656 / NCTC 13227 / J2315 / CF5610) (Burkholderia cepacia (strain J2315)).